The following is a 101-amino-acid chain: Large ribosomal subunit protein bL27 (101 aa).

The disordered stretch occupies residues 1–21; it reads MAHKKAGGSSRNGRDSRSKRL.

The protein belongs to the bacterial ribosomal protein bL27 family.

This chain is Large ribosomal subunit protein bL27, found in Buchnera aphidicola subsp. Cinara cedri (strain Cc).